Here is a 680-residue protein sequence, read N- to C-terminus: Putative E3 ubiquitin-protein ligase UNKL (680 aa).

Residues 1–22 are disordered; it reads MPSVSKAAAAALSGSPPQTEKP. C3H1-type zinc fingers lie at residues 75–104, 115–145, 243–277, and 283–310; these read YSPD…HRTT, YYKT…HGPL, QYRS…HSRT, and PEST…HVEK. Composition is skewed to low complexity over residues 326-337, 375-396, 465-497, and 545-562; these read TSPSSTGSGQPG, VSSS…SPTA, SLPR…VGSS, and SPSP…SASP. 4 disordered regions span residues 326–358, 375–400, 442–520, and 545–566; these read TSPS…QDSK, VSSS…LPAP, DGHD…SAAS, and SPSP…NGAE. Residues 563–619 are a coiled coil; sequence NGAELARVRRQLDEAKRKIRQWEESWQQVKQVCDAWQREAQEAKERARVADSDRQLA. The RING-type zinc finger occupies 639-674; sequence CVACRERAHGAVLRPCQHHILCEPCAATAPECPYCK.

Belongs to the unkempt family. As to quaternary structure, isoform 4 (C-terminal) interacts with the GTP-bound form of RAC1. Isoform 4 (C-terminal) interacts with SMARCD2/BAF60b. In terms of processing, isoform 4 is ubiquitinated in the C-terminal. Ubiquitination is enhanced by activated RAC1. The presence of the RING finger domain is not essential for ubiquitination to occur.

It localises to the cytoplasm. It is found in the nucleus. Its pathway is protein modification; protein ubiquitination. Its function is as follows. May participate in a protein complex showing an E3 ligase activity regulated by RAC1. Ubiquitination is directed towards itself and possibly other substrates, such as SMARCD2/BAF60b. Intrinsic E3 ligase activity has not been proven. This is Putative E3 ubiquitin-protein ligase UNKL (UNKL) from Homo sapiens (Human).